The sequence spans 673 residues: Estrogen receptor beta (673 aa).

The tract at residues 1–181 (MASSPGLDPH…SAVGKADMHF (181 aa)) is modulating. 2 NR C4-type zinc fingers span residues 182 to 202 (CAVC…CEGC) and 218 to 242 (CPAT…LRKC). The nuclear receptor DNA-binding region spans 182 to 247 (CAVCHDYASG…RLRKCYEVGM (66 aa)). Residues 316–552 (SPEEFISRIM…DLLLEMLDAN (237 aa)) enclose the NR LBD domain. Positions 553-602 (TSSGGSQPSSSPSSETYSDQHQYPQPPSHLHPGSEQTTADHAIVPPLGPT) are disordered. Residues 554–566 (SSGGSQPSSSPSS) show a composition bias toward low complexity.

It belongs to the nuclear hormone receptor family. NR3 subfamily. Binds DNA as a homodimer. Can form a heterodimer with ER-alpha. Abundant in the liver and testes, less abundant in the ovary and barely detectable in the muscle.

Its subcellular location is the nucleus. In terms of biological role, binds estrogens with an affinity similar to that of ER-alpha, and activates expression of reporter genes containing estrogen response elements (ERE) in an estrogen-dependent manner. The protein is Estrogen receptor beta (esr2) of Micropogonias undulatus (Atlantic croaker).